The sequence spans 67 residues: Conotoxin VnMMSK-02 (67 aa).

The first 20 residues, 1–20, serve as a signal peptide directing secretion; the sequence is MMSKLGALLTICLLLFPLTA. A propeptide spanning residues 21–52 is cleaved from the precursor; that stretch reads LPLDGDQPADRPAERMQDDISSEQHPLFDKER. At Q53 the chain carries Pyrrolidone carboxylic acid. 3 disulfides stabilise this stretch: C54–C66, C55–C62, and C59–C65. P64 carries the post-translational modification 4-hydroxyproline. The residue at position 66 (C66) is a Cysteine amide.

This sequence belongs to the conotoxin M superfamily. In terms of tissue distribution, expressed by the venom duct.

The protein localises to the secreted. The chain is Conotoxin VnMMSK-02 from Conus ventricosus (Mediterranean cone).